Here is a 122-residue protein sequence, read N- to C-terminus: Putative cryptic phosphonate transport system permease protein PhnE2 (122 aa).

In terms of domain architecture, ABC transmembrane type-1 spans 1–114 (MLALFIHTTG…VTVSLLDFLS (114 aa)). Helical transmembrane passes span 3–23 (ALFI…VEAI), 39–59 (LEEI…SYSL), 68–88 (SATV…WEAI), and 93–113 (FQQT…LDFL).

It belongs to the binding-protein-dependent transport system permease family. If the reading frame is restored, the complex is composed of two ATP-binding proteins (PhnC), two transmembrane proteins (PhnE) and a solute-binding protein (PhnD).

Its subcellular location is the cell inner membrane. C-terminal fragment of the PhnE protein, part of a phosphonate usage operon that is cryptic in K12 strains. Growth of K12 strains on phosphonate can be observed when it is used as the sole phosphorus source after a 60 hour lag period, suggesting the operon is activated. An intact PhnE in strain B is (AC A0A140NFA3). Part of the binding-protein-dependent transport system for phosphonates; probably responsible for the translocation of the substrate across the membrane. The polypeptide is Putative cryptic phosphonate transport system permease protein PhnE2 (phnE) (Escherichia coli (strain K12)).